Reading from the N-terminus, the 209-residue chain is Dof zinc finger protein DOF1.6 (209 aa).

Residues 1–17 show a composition bias toward polar residues; the sequence is MPSEPNQTRPTRVQPST. Residues 1–29 are disordered; sequence MPSEPNQTRPTRVQPSTAAYPPPNLAEPL. Over residues 20 to 29 the composition is skewed to pro residues; it reads YPPPNLAEPL. Residues 29–83 form a Dof-type zinc finger; sequence LPCPRCNSTTTKFCYYNNYNLAQPRYYCKSCRRYWTQGGTLRDVPVGGGTRRSSS. Residues Cys-31, Cys-34, Cys-56, and Cys-59 each coordinate Zn(2+). The disordered stretch occupies residues 70–116; that stretch reads RDVPVGGGTRRSSSKRHRSFSTTATSSSSSSSVITTTTQEPATTEAS. Low complexity predominate over residues 89-116; that stretch reads FSTTATSSSSSSSVITTTTQEPATTEAS.

It localises to the nucleus. Its function is as follows. Transcription factor that binds specifically to a 5'-AA[AG]G-3' consensus core sequence. This chain is Dof zinc finger protein DOF1.6 (DOF1.6), found in Arabidopsis thaliana (Mouse-ear cress).